The chain runs to 176 residues: Ribosome rescue factor SmrB (176 aa).

The Smr domain maps to 93 to 168 (LDLHGYRQSE…GDAALLVLID (76 aa)).

Belongs to the SmrB family. As to quaternary structure, associates with collided ribosomes, but not with correctly translating polysomes.

Acts as a ribosome collision sensor. Detects stalled/collided disomes (pairs of ribosomes where the leading ribosome is stalled and a second ribosome has collided with it) and endonucleolytically cleaves mRNA at the 5' boundary of the stalled ribosome. Stalled/collided disomes form a new interface (primarily via the 30S subunits) that binds SmrB. Cleaved mRNA becomes available for tmRNA ligation, leading to ribosomal subunit dissociation and rescue of stalled ribosomes. In Shewanella baltica (strain OS195), this protein is Ribosome rescue factor SmrB.